Here is a 354-residue protein sequence, read N- to C-terminus: Uroporphyrinogen decarboxylase (354 aa).

Substrate-binding positions include 27 to 31 (RQAGR), aspartate 77, tyrosine 154, serine 209, and histidine 327.

It belongs to the uroporphyrinogen decarboxylase family. As to quaternary structure, homodimer.

Its subcellular location is the cytoplasm. It catalyses the reaction uroporphyrinogen III + 4 H(+) = coproporphyrinogen III + 4 CO2. Its pathway is porphyrin-containing compound metabolism; protoporphyrin-IX biosynthesis; coproporphyrinogen-III from 5-aminolevulinate: step 4/4. Its function is as follows. Catalyzes the decarboxylation of four acetate groups of uroporphyrinogen-III to yield coproporphyrinogen-III. This is Uroporphyrinogen decarboxylase from Shewanella piezotolerans (strain WP3 / JCM 13877).